The sequence spans 136 residues: HetP-like commitment protein Alr2902 (136 aa).

Positions 94-109 (KASTQDLNQSNNSDYL) are enriched in polar residues. The disordered stretch occupies residues 94–120 (KASTQDLNQSNNSDYLTTPEPDKRGNI).

It belongs to the HetP family. As to quaternary structure, in bacterial two-hybrid assays interacts robustly with HetR and Alr3234 and weakly with itself, HetP and Asl1930.

In terms of biological role, delays heterocyst differentiation and commitment when nitrogen is limiting. Interplay between the 4 HetP paralogs controls the timing of commitment to heterocyst formation and its duration. Epistatic analysis show that the 3 paralogs act upstream of hetP to delay commitment (asl1930, alr3234) or inhibit development (alr2902). Asl1930 and Alr3234 must also attenuate the activity of Alr2902. When only this homolog is present no heterocysts are formed, showing it inhibits development. Ectopic expression partially complements a hetP deletion. In Nostoc sp. (strain PCC 7120 / SAG 25.82 / UTEX 2576), this protein is HetP-like commitment protein Alr2902.